The following is a 207-amino-acid chain: Large ribosomal subunit protein bL25 (207 aa).

Residues 171–207 are disordered; sequence EEETVVTVSAPRAEEEPTTTEAPEPEAVHGNDEEPVE. Over residues 196–207 the composition is skewed to basic and acidic residues; sequence EAVHGNDEEPVE.

This sequence belongs to the bacterial ribosomal protein bL25 family. CTC subfamily. Part of the 50S ribosomal subunit; part of the 5S rRNA/L5/L18/L25 subcomplex. Contacts the 5S rRNA. Binds to the 5S rRNA independently of L5 and L18.

This is one of the proteins that binds to the 5S RNA in the ribosome where it forms part of the central protuberance. This Listeria innocua serovar 6a (strain ATCC BAA-680 / CLIP 11262) protein is Large ribosomal subunit protein bL25.